The following is a 548-amino-acid chain: Probable 2,3-bisphosphoglycerate-independent phosphoglycerate mutase (548 aa).

2 residues coordinate Mn(2+): Asp20 and Ser73. Residue Ser73 is the Phosphoserine intermediate of the active site. Residues His134, 164–165 (RD), Arg200, Arg207, 279–282 (RGDR), and Lys354 each bind substrate. Mn(2+) is bound by residues Asp422, His426, Asp463, His464, and His493.

The protein belongs to the BPG-independent phosphoglycerate mutase family. Monomer. Requires Mn(2+) as cofactor.

It catalyses the reaction (2R)-2-phosphoglycerate = (2R)-3-phosphoglycerate. The protein operates within carbohydrate degradation; glycolysis; pyruvate from D-glyceraldehyde 3-phosphate: step 3/5. In terms of biological role, catalyzes the interconversion of 2-phosphoglycerate and 3-phosphoglycerate. This Leptospira interrogans serogroup Icterohaemorrhagiae serovar copenhageni (strain Fiocruz L1-130) protein is Probable 2,3-bisphosphoglycerate-independent phosphoglycerate mutase (gpmI).